Here is a 156-residue protein sequence, read N- to C-terminus: RING finger protein 224 (156 aa).

The RING-type zinc-finger motif lies at 24–71 (CIICCSAYDLSGHLPRRLYCGHTFCQACVRRLDTPAPEQRWIPCPQCR).

In Homo sapiens (Human), this protein is RING finger protein 224 (RNF224).